The following is a 908-amino-acid chain: Protein translocase subunit SecA (908 aa).

ATP contacts are provided by residues Q87, 105–109 (GEGKT), and D512. A disordered region spans residues 865–908 (GGDDGSDEMMAHTPMIRDGDKVGRNDPCPCGSGRKYKQCHGKLS). A compositionally biased stretch (basic and acidic residues) spans 879–888 (MIRDGDKVGR). Positions 892, 894, 903, and 904 each coordinate Zn(2+). Over residues 898–908 (RKYKQCHGKLS) the composition is skewed to basic residues.

The protein belongs to the SecA family. Monomer and homodimer. Part of the essential Sec protein translocation apparatus which comprises SecA, SecYEG and auxiliary proteins SecDF-YajC and YidC. Zn(2+) serves as cofactor.

The protein resides in the cell inner membrane. Its subcellular location is the cytoplasm. The enzyme catalyses ATP + H2O + cellular proteinSide 1 = ADP + phosphate + cellular proteinSide 2.. Functionally, part of the Sec protein translocase complex. Interacts with the SecYEG preprotein conducting channel. Has a central role in coupling the hydrolysis of ATP to the transfer of proteins into and across the cell membrane, serving both as a receptor for the preprotein-SecB complex and as an ATP-driven molecular motor driving the stepwise translocation of polypeptide chains across the membrane. The protein is Protein translocase subunit SecA of Shewanella sp. (strain MR-4).